Reading from the N-terminus, the 81-residue chain is Photosystem I iron-sulfur center (81 aa).

4Fe-4S ferredoxin-type domains lie at 2–31 (SHSVKIYDTCIGCTQCVRACPTDVLEMIPW) and 39–68 (IAPAPRTEDCVGCKRCESACPTDFLSVRVY). Cys-11, Cys-14, Cys-17, Cys-21, Cys-48, Cys-51, Cys-54, and Cys-58 together coordinate [4Fe-4S] cluster.

The eukaryotic PSI reaction center is composed of at least 11 subunits. Requires [4Fe-4S] cluster as cofactor.

Its subcellular location is the plastid. It localises to the chloroplast thylakoid membrane. The enzyme catalyses reduced [plastocyanin] + hnu + oxidized [2Fe-2S]-[ferredoxin] = oxidized [plastocyanin] + reduced [2Fe-2S]-[ferredoxin]. In terms of biological role, apoprotein for the two 4Fe-4S centers FA and FB of photosystem I (PSI); essential for photochemical activity. FB is the terminal electron acceptor of PSI, donating electrons to ferredoxin. The C-terminus interacts with PsaA/B/D and helps assemble the protein into the PSI complex. Required for binding of PsaD and PsaE to PSI. PSI is a plastocyanin-ferredoxin oxidoreductase, converting photonic excitation into a charge separation, which transfers an electron from the donor P700 chlorophyll pair to the spectroscopically characterized acceptors A0, A1, FX, FA and FB in turn. The polypeptide is Photosystem I iron-sulfur center (Liriodendron tulipifera (Tuliptree)).